The following is a 355-amino-acid chain: Probable poly-beta-1,6-N-acetyl-D-glucosamine export protein (355 aa).

Helical transmembrane passes span 13–30 (AFIC…QITL), 45–67 (YIRN…LTTL), 74–96 (INYL…LFYS), 116–138 (VLGQ…SYII), 145–167 (LFNS…HYFL), 187–204 (MILG…IGYN), 211–233 (FLEK…FIAV), 243–262 (SFTY…LLGV), 269–291 (MLLN…HPII), and 306–328 (TIVF…GMML).

The protein belongs to the acyltransferase 3 family.

The protein resides in the cell membrane. Presumably involved in the export of the biofilm adhesin polysaccharide poly-beta-1,6-N-acetyl-D-glucosamine (PNAG, also referred to as PIA) across the cell membrane. The chain is Probable poly-beta-1,6-N-acetyl-D-glucosamine export protein (icaC) from Staphylococcus epidermidis.